We begin with the raw amino-acid sequence, 389 residues long: Pregnancy-associated glycoprotein 1 (389 aa).

Positions 1–15 (MKWLVILGLVALSEC) are cleaved as a signal peptide. The Peptidase A1 domain occupies 76 to 386 (YVGNITIGTP…DRGQNRIGLR (311 aa)). N-linked (GlcNAc...) asparagine glycosylation is present at N79. D94 is an active-site residue. C107 and C112 form a disulfide bridge. N-linked (GlcNAc...) asparagine glycosylation occurs at N130. A disulfide bridge connects residues C268 and C272. D277 is a catalytic residue. An intrachain disulfide couples C311 to C345. N-linked (GlcNAc...) asparagine glycosylation occurs at N348.

Belongs to the peptidase A1 family. Expressed throughout the chorion, with the signal localized exclusively over the trophectoderm.

Its subcellular location is the secreted. It is found in the extracellular space. Functionally, appears to be proteolytically inactive. The sequence is that of Pregnancy-associated glycoprotein 1 from Sus scrofa (Pig).